The sequence spans 379 residues: Chaperone protein DnaJ (379 aa).

A J domain is found at 5–70 (DYYEILGVSK…QKRAAYDQYG (66 aa)). A CR-type zinc finger spans residues 134–212 (GVTKEIRIPT…CHGHGRVEKS (79 aa)). Positions 147, 150, 164, 167, 186, 189, 200, and 203 each coordinate Zn(2+). 4 CXXCXGXG motif repeats span residues 147–154 (CDVCHGSG), 164–171 (CPTCHGSG), 186–193 (CPHCQGRG), and 200–207 (CHKCHGHG).

The protein belongs to the DnaJ family. As to quaternary structure, homodimer. Zn(2+) serves as cofactor.

The protein localises to the cytoplasm. Its function is as follows. Participates actively in the response to hyperosmotic and heat shock by preventing the aggregation of stress-denatured proteins and by disaggregating proteins, also in an autonomous, DnaK-independent fashion. Unfolded proteins bind initially to DnaJ; upon interaction with the DnaJ-bound protein, DnaK hydrolyzes its bound ATP, resulting in the formation of a stable complex. GrpE releases ADP from DnaK; ATP binding to DnaK triggers the release of the substrate protein, thus completing the reaction cycle. Several rounds of ATP-dependent interactions between DnaJ, DnaK and GrpE are required for fully efficient folding. Also involved, together with DnaK and GrpE, in the DNA replication of plasmids through activation of initiation proteins. This is Chaperone protein DnaJ from Salmonella agona (strain SL483).